A 302-amino-acid polypeptide reads, in one-letter code: UPF0725 protein At1g23960 (302 aa).

An N-acetylalanine modification is found at alanine 2.

The protein belongs to the UPF0725 (EMB2204) family.

This Arabidopsis thaliana (Mouse-ear cress) protein is UPF0725 protein At1g23960.